A 423-amino-acid chain; its full sequence is UPF0229 protein PLES_05841 (423 aa).

The disordered stretch occupies residues 84 to 107; it reads AGEHIARPSGGGGGRGGGKASNSG. Residues 92 to 102 show a composition bias toward gly residues; that stretch reads SGGGGGRGGGK.

Belongs to the UPF0229 family.

The chain is UPF0229 protein PLES_05841 from Pseudomonas aeruginosa (strain LESB58).